Reading from the N-terminus, the 574-residue chain is Protein OBERON 2 (574 aa).

Polar residues-rich tracts occupy residues 1-10 and 65-76; these read MGTSSGSNHP and SMSQKTEPDSME. The tract at residues 1–76 is disordered; the sequence is MGTSSGSNHP…SQKTEPDSME (76 aa). The segment at 226–291 adopts a PHD-type zinc-finger fold; sequence LCMCTICNKF…VFKCRACNRT (66 aa). Positions 416–524 form a coiled coil; it reads KKARMALETC…LFEKIKLQEN (109 aa).

As to quaternary structure, self-interacts. Interacts with OBE1, OBE3 and OBE4. Binds to VPg of pea seed borne mosaic virus (PSbMV), turnip mosaic virus (TuMV) and lettuce mosaic virus (LMV), but not with VPg of tobacco etch virus (TEV), cowpea mosaic virus (CPMV), tomato black ring virus (TBRV) and grapevine fan leaf virus (GFLV). Expressed in roots, seedlings, stems, leaves, flowers and siliques, especially in the vasculature.

It localises to the nucleus. Its function is as follows. Probable transcription factor that acts together with OBE1 for the maintenance and/or establishment of both the shoot and root meristems, probably by controlling the expression of the meristem genes such as WUS, PLT1 and PLT2 and of genes required for auxin responses. Promotes cell meristematic activity via the WUSCHEL-CLAVATA pathway. Involved in the development of the basal pole and in auxin-mediated root and vascular development in the embryo. Confers sensitivity to turnip mosaic virus (TuMV) probably by promoting viral movement and multiplication via interaction with TuMV VPg. This is Protein OBERON 2 from Arabidopsis thaliana (Mouse-ear cress).